Reading from the N-terminus, the 466-residue chain is Soluble pyridine nucleotide transhydrogenase (466 aa).

36-45 (ERYQNVGGGC) lines the FAD pocket.

The protein belongs to the class-I pyridine nucleotide-disulfide oxidoreductase family. FAD is required as a cofactor.

The protein localises to the cytoplasm. The catalysed reaction is NAD(+) + NADPH = NADH + NADP(+). Conversion of NADPH, generated by peripheral catabolic pathways, to NADH, which can enter the respiratory chain for energy generation. The polypeptide is Soluble pyridine nucleotide transhydrogenase (Shigella boydii serotype 18 (strain CDC 3083-94 / BS512)).